A 732-amino-acid chain; its full sequence is Elongation factor 2 (732 aa).

Positions 19-230 (ERIRNMGIAA…VSFKDIIDLT (212 aa)) constitute a tr-type G domain. GTP is bound by residues 28–35 (AHIDHGKT), 94–98 (DTPGH), and 148–151 (NKVD). His597 bears the Diphthamide mark.

The protein belongs to the TRAFAC class translation factor GTPase superfamily. Classic translation factor GTPase family. EF-G/EF-2 subfamily.

It is found in the cytoplasm. In terms of biological role, catalyzes the GTP-dependent ribosomal translocation step during translation elongation. During this step, the ribosome changes from the pre-translocational (PRE) to the post-translocational (POST) state as the newly formed A-site-bound peptidyl-tRNA and P-site-bound deacylated tRNA move to the P and E sites, respectively. Catalyzes the coordinated movement of the two tRNA molecules, the mRNA and conformational changes in the ribosome. This chain is Elongation factor 2, found in Thermococcus sibiricus (strain DSM 12597 / MM 739).